Here is a 333-residue protein sequence, read N- to C-terminus: Phosphate acyltransferase (333 aa).

Belongs to the PlsX family. As to quaternary structure, homodimer. Probably interacts with PlsY.

It localises to the cytoplasm. It carries out the reaction a fatty acyl-[ACP] + phosphate = an acyl phosphate + holo-[ACP]. It functions in the pathway lipid metabolism; phospholipid metabolism. In terms of biological role, catalyzes the reversible formation of acyl-phosphate (acyl-PO(4)) from acyl-[acyl-carrier-protein] (acyl-ACP). This enzyme utilizes acyl-ACP as fatty acyl donor, but not acyl-CoA. The polypeptide is Phosphate acyltransferase (Cellvibrio japonicus (strain Ueda107) (Pseudomonas fluorescens subsp. cellulosa)).